A 149-amino-acid chain; its full sequence is uncharacterized protein (149 aa).

A disordered region spans residues 1–103 (MFGLKVKNAE…SPTQGSRLRH (103 aa)). Residues 7-18 (KNAEADTAKSNE) show a composition bias toward basic and acidic residues. Residues 26–41 (TGSSTTSGSGQSTQRG) are compositionally biased toward low complexity. Positions 61-72 (GSQGNSGDQGTE) are enriched in polar residues.

Belongs to the adhesin P1 family.

This is an uncharacterized protein from Mycoplasma pneumoniae (strain ATCC 29342 / M129 / Subtype 1) (Mycoplasmoides pneumoniae).